The primary structure comprises 768 residues: MSNEVETSTTNGQPDQQAAPKAPSKKEKKKGSEKTDEYLLARFKGDGVKYKAKLIGIDDVPDARGDKMSQDSMMKLKGMAAAGRSQGQHKQRIWVNISLSGIKIIDEKTGVIEHEHPVNKISFIARDVTDNRAFGYVCGGEGQHQFFAIKTGQQAEPLVVDLKDLFQVIYNVKKKEEEKKKVEEANKAEENGSEALMTLDDQANKLKLGVDQMDLFGDMSTPPDLNNPTESRDILLVDLNSEIDTNQNSLRENPFLTNGVTSCSLPRPKPQASFLPESAFSANLNFFPTPNPDPFRDDPFAQPDQSAPSSFHSLTSADQKKANPGSLSTPQSKGPLNGDTDYFGQQFDQISNRTGKQEAQGGPWPYPSSQTQQAVRTQNGVSEKEQNGFHIKSSPNPFVGSPPKGLSVPNGVKQDLESSVQSSAHDSIAIIPPPQSTKPGRGRRTAKSSANDLLASDIFASEPPGQMSPTGQPAVPQANFMDLFKTSAPAPMGSGPLVGLGTVPVTPPQAGPWTPVVFTPSTTVVPGAIISGQPSGFGQPLVFGTTPAVQVWNQPSSFATAASPPPPAVWCPTTSVAPNTWSSTSPLGNPFQSSNIFPPSTISTQSFPQPMMSSVLVTPPQPPPRNGPLKDTLSDAFTGLDPLGDKEVKEVKEMFKDFQLRQPPLVPSRKGETPSSGTSSAFSSYFNNKVGIPQEHVDHDDFDANQLLNKINEPPKPAPRQGVLSGTKSADNSLENPFSKGFSSTNPSVVSQPASSDAHRSPFGNPFA.

Over residues 1 to 16 (MSNEVETSTTNGQPDQ) the composition is skewed to polar residues. Residues 1–36 (MSNEVETSTTNGQPDQQAAPKAPSKKEKKKGSEKTD) form a disordered region. The residue at position 2 (Ser-2) is an N-acetylserine. A Phosphoserine modification is found at Ser-2. Residues 45–196 (GDGVKYKAKL…KAEENGSEAL (152 aa)) form the PID domain. The residue at position 170 (Tyr-170) is a Phosphotyrosine. The residue at position 193 (Ser-193) is a Phosphoserine. Residues 230–447 (ESRDILLVDL…KPGRGRRTAK (218 aa)) are required for localization to clathrin-coated pits. The disordered stretch occupies residues 285–449 (NFFPTPNPDP…GRGRRTAKSS (165 aa)). 2 consecutive short sequence motifs (DPF) follow at residues 293 to 295 (DPF) and 298 to 300 (DPF). Composition is skewed to polar residues over residues 303–317 (PDQS…LTSA), 325–334 (GSLSTPQSKG), and 367–381 (PSSQ…QNGV). 2 positions are modified to phosphoserine; in mitosis: Ser-326 and Ser-328. At Ser-401 the chain carries Phosphoserine. The tract at residues 601 to 731 (TISTQSFPQP…GVLSGTKSAD (131 aa)) is sufficient for interaction with GRB2. Residues 619 to 627 (PPQPPPRNG) are required for interaction with CSK. Residues 649–768 (KEVKEMFKDF…HRSPFGNPFA (120 aa)) are required for interaction with MYO6. Disordered stretches follow at residues 660–682 (LRQP…SSAF) and 709–768 (NKIN…NPFA). Residues 663-671 (PPLVPSRKG) are required for interaction with GRB2 and CSK. A Phosphothreonine modification is found at Thr-673. Ser-675 is subject to Phosphoserine. A sufficient for interaction with SH3KBP1 SH3 domain region spans residues 708–724 (LNKINEPPKPAPRQGVL). Residues 724–755 (LSGTKSADNSLENPFSKGFSSTNPSVVSQPAS) are compositionally biased toward polar residues. 2 positions are modified to phosphoserine: Ser-729 and Ser-761.

Can interact (via PID domain) with LDLR, APP, APLP1 and APLP2, and weakly with INPP5D (via NPXY motifs); the interaction is impaired by tyrosine phosphorylation of the respective NPXY motifs. Can weakly interact (via PID domain) with LRP1 (via NPXY motif); the interaction is enhanced by tyrosine phosphorylation of the NPXY motif. Interacts with LRP2 (via NPXY motif); the interaction is not affected by tyrosine phosphorylation of the NPXY motif. Interacts with clathrin; in vitro can assemble clathrin triskelia into polyhedral coats. Interacts with AP2A2, ITGB1, ITGB3, ITGB5, PIAS2, DAB2IP, NOSTRIN, FCHO1, DVL3, EPS15, ITSN1 and EPS15L1. Interacts with SH3KBP1 (via SH3 domains). Interacts with GRB2; competes with SOS1 for binding to GRB2 and the interaction is enhanced by EGF and NT-3 stimulation. Interacts with MAP3K7; the interaction is induced by TGF-beta stimulation and may mediate TGF-beta stimulated JNK activation. Interacts with AXIN1 and PPP1CA; the interactions are mutually exclusive. Interacts with the globular tail of MYO6. Interacts (via DPF motifs) with FCHO2; the interaction is direct and required for DAB2-mediated LDLR endocytosis. Interacts with LRP6; the interaction involves LRP6 phosphorylation by CK2 and sequesters LRP6 towards clathrin-mediated endocytosis. Associates with the TGF-beta receptor complex. Interacts with SMAD2 and SMAD3; the interactions are enhanced upon TGF-beta stimulation. Interacts with GRB2; the interaction is enhanced by EGF and NT-3 stimulation. Interacts with SRC; the interaction is enhanced by EGF stimulation. Interacts with GRB2; the interaction is enhanced by EGF and NT-3 stimulation. Interacts (via NPXY motif) with DAB2 (via PID domain). In terms of processing, phosphorylated. Phosphorylation during mitosis is leading to membrane displacement. There is some ambiguity for the mitotic phosphosite Ser-326/328. As to expression, prostate.

It localises to the cytoplasm. Its subcellular location is the cytoplasmic vesicle. The protein localises to the clathrin-coated vesicle membrane. The protein resides in the membrane. It is found in the clathrin-coated pit. In terms of biological role, adapter protein that functions as a clathrin-associated sorting protein (CLASP) required for clathrin-mediated endocytosis of selected cargo proteins. Can bind and assemble clathrin, and binds simultaneously to phosphatidylinositol 4,5-bisphosphate (PtdIns(4,5)P2) and cargos containing non-phosphorylated NPXY internalization motifs, such as the LDL receptor, to recruit them to clathrin-coated pits. Can function in clathrin-mediated endocytosis independently of the AP-2 complex. Involved in endocytosis of integrin beta-1; this function seems to redundant with the AP-2 complex and seems to require DAB2 binding to endocytosis accessory EH domain-containing proteins such as EPS15, EPS15L1 and ITSN1. Involved in endocytosis of cystic fibrosis transmembrane conductance regulator/CFTR. Involved in endocytosis of megalin/LRP2 lipoprotein receptor during embryonal development. Required for recycling of the TGF-beta receptor. Involved in CFTR trafficking to the late endosome. Involved in several receptor-mediated signaling pathways. Involved in TGF-beta receptor signaling and facilitates phosphorylation of the signal transducer SMAD2. Mediates TFG-beta-stimulated JNK activation. May inhibit the canoniocal Wnt/beta-catenin signaling pathway by stabilizing the beta-catenin destruction complex through a competing association with axin preventing its dephosphorylation through protein phosphatase 1 (PP1). Sequesters LRP6 towards clathrin-mediated endocytosis, leading to inhibition of Wnt/beta-catenin signaling. May activate non-canonical Wnt signaling. In cell surface growth factor/Ras signaling pathways proposed to inhibit ERK activation by interrupting the binding of GRB2 to SOS1 and to inhibit SRC by preventing its activating phosphorylation at 'Tyr-419'. Proposed to be involved in modulation of androgen receptor (AR) signaling mediated by SRC activation; seems to compete with AR for interaction with SRC. Plays a role in the CSF-1 signal transduction pathway. Plays a role in cellular differentiation. Involved in cell positioning and formation of visceral endoderm (VE) during embryogenesis and proposed to be required in the VE to respond to Nodal signaling coming from the epiblast. Required for the epithelial to mesenchymal transition, a process necessary for proper embryonic development. May be involved in myeloid cell differentiation and can induce macrophage adhesion and spreading. May act as a tumor suppressor. The polypeptide is Disabled homolog 2 (Dab2) (Rattus norvegicus (Rat)).